Here is a 311-residue protein sequence, read N- to C-terminus: MNGVKIIAGTSNKTLSEEIAGYLGLRLTDALITTFSDGEIRVQINESIRGYHVYVITSLSNPVNHNLMELLLTLDAVKRSSPKEITAVVPYYAYGRQDRQDKPRTPISAKLVADLIQKAGANRVIVVDLHSPQIQGFFDIPVEHLTAIPVLYDYIRKNVVLENPIVVSPDAGGVKRARDLANKLGCGIGVILKRRPEPNKAEVMDVVGDIEGKEAIIVDDIIDTAGTLVAAANLLVNKGVKRVIACATHGIFSGPAVERLTNSPIEKVIVTNTLPVYEKKFGKLEVVSIAPLIGEAIRRIQEGTSVSSLFT.

ATP contacts are provided by residues 37-39 (DGE) and 96-97 (RQ). Positions 130 and 170 each coordinate Mg(2+). The active site involves Lys-193. D-ribose 5-phosphate is bound by residues Arg-195, Asp-219, and 223–227 (DTAGT).

It belongs to the ribose-phosphate pyrophosphokinase family. Class I subfamily. In terms of assembly, homohexamer. Mg(2+) serves as cofactor.

It is found in the cytoplasm. The enzyme catalyses D-ribose 5-phosphate + ATP = 5-phospho-alpha-D-ribose 1-diphosphate + AMP + H(+). It functions in the pathway metabolic intermediate biosynthesis; 5-phospho-alpha-D-ribose 1-diphosphate biosynthesis; 5-phospho-alpha-D-ribose 1-diphosphate from D-ribose 5-phosphate (route I): step 1/1. In terms of biological role, involved in the biosynthesis of the central metabolite phospho-alpha-D-ribosyl-1-pyrophosphate (PRPP) via the transfer of pyrophosphoryl group from ATP to 1-hydroxyl of ribose-5-phosphate (Rib-5-P). The protein is Ribose-phosphate pyrophosphokinase of Aquifex aeolicus (strain VF5).